The following is a 165-amino-acid chain: Large ribosomal subunit protein uL10 (165 aa).

This sequence belongs to the universal ribosomal protein uL10 family. Part of the ribosomal stalk of the 50S ribosomal subunit. The N-terminus interacts with L11 and the large rRNA to form the base of the stalk. The C-terminus forms an elongated spine to which L12 dimers bind in a sequential fashion forming a multimeric L10(L12)X complex.

Functionally, forms part of the ribosomal stalk, playing a central role in the interaction of the ribosome with GTP-bound translation factors. This is Large ribosomal subunit protein uL10 from Mycoplasmopsis synoviae (strain 53) (Mycoplasma synoviae).